Consider the following 229-residue polypeptide: MIKNRDSFLDHVANQLGRPRQTEGVLRPNYRVSPQFEVLKDASKDELVTVLKEQCVAIHTDFKQVESGQLETALDETIDMYGAKSVIAWDDRRFHEFGLGSFLTRPSVSLWDNRDSKRSIEQAEIADVGITFSDITLAESGTVTLFSSNGKGRSVSLLPRYYIAIIPKSTLVARMTQAARHIRQLTGEGRLPSCINFISGPSNSADIEMSLVVGVHGPLKACYIVVDDK.

The protein belongs to the LutC/YkgG family.

Its function is as follows. Is involved in L-lactate degradation and allows cells to grow with lactate as the sole carbon source. The polypeptide is Lactate utilization protein C (Shouchella clausii (strain KSM-K16) (Alkalihalobacillus clausii)).